Consider the following 415-residue polypeptide: Homoserine O-succinyltransferase (415 aa).

The 315-residue stretch at 69–383 folds into the AB hydrolase-1 domain; the sequence is NAVLVCHALN…PHGHDAFLLD (315 aa). S175 (nucleophile) is an active-site residue. Residue R245 participates in substrate binding. Residues D344 and H377 contribute to the active site. D378 lines the substrate pocket.

This sequence belongs to the AB hydrolase superfamily. MetX family. In terms of assembly, homodimer.

It localises to the cytoplasm. The enzyme catalyses L-homoserine + succinyl-CoA = O-succinyl-L-homoserine + CoA. Its pathway is amino-acid biosynthesis; L-methionine biosynthesis via de novo pathway; O-succinyl-L-homoserine from L-homoserine: step 1/1. Transfers a succinyl group from succinyl-CoA to L-homoserine, forming succinyl-L-homoserine. The polypeptide is Homoserine O-succinyltransferase (Bordetella parapertussis (strain 12822 / ATCC BAA-587 / NCTC 13253)).